Reading from the N-terminus, the 3164-residue chain is Protein eyes shut homolog (3164 aa).

Positions 1–21 are cleaved as a signal peptide; that stretch reads MTDKSIIILSLMVFHSSFING. N-linked (GlcNAc...) asparagine glycans are attached at residues asparagine 42, asparagine 105, asparagine 117, and asparagine 166. EGF-like domains are found at residues 170–212, 213–254, and 256–292; these read KQQF…KYCQ, ELDA…KNCS, and IIGQCQPHVCFHGNCSNITSNSFICECDEQFSGPFCE. Cystine bridges form between cysteine 174–cysteine 189, cysteine 183–cysteine 200, cysteine 202–cysteine 211, cysteine 217–cysteine 228, cysteine 222–cysteine 242, cysteine 244–cysteine 253, cysteine 260–cysteine 270, cysteine 265–cysteine 280, and cysteine 282–cysteine 291. Asparagine 225, asparagine 252, asparagine 269, and asparagine 272 each carry an N-linked (GlcNAc...) asparagine glycan. Residues asparagine 311 and asparagine 343 are each glycosylated (N-linked (GlcNAc...) asparagine). 2 consecutive EGF-like domains span residues 332–368 and 370–406; these read DVSECSLVPCQNGTDCIQISNDVMCICSPIFTDLLCK and IQTSCESFSLRNNATCKKWEKDYHCSCISGFTEKNCE. Cystine bridges form between cysteine 336–cysteine 347, cysteine 341–cysteine 356, cysteine 358–cysteine 367, cysteine 374–cysteine 385, and cysteine 396–cysteine 405. Asparagine 382 is a glycosylation site (N-linked (GlcNAc...) asparagine). N-linked (GlcNAc...) asparagine glycans are attached at residues asparagine 506, asparagine 521, and asparagine 566. One can recognise an EGF-like 6 domain in the interval 567-602; the sequence is TTDDQENECQHEAICKDEINRPRCSCSLSYIGRLCV. Intrachain disulfides connect cysteine 575–cysteine 590 and cysteine 592–cysteine 601. 2 N-linked (GlcNAc...) asparagine glycosylation sites follow: asparagine 611 and asparagine 654. Residues 643-679 form the EGF-like 7 domain; sequence DTEDCKSVSCKNGTTSIHLRGYFFCKCVPGFKGTQRE. Disulfide bonds link cysteine 652-cysteine 667, cysteine 685-cysteine 696, cysteine 690-cysteine 705, cysteine 707-cysteine 719, cysteine 737-cysteine 748, and cysteine 742-cysteine 757. Positions 681–720 constitute an EGF-like 8; calcium-binding domain; that stretch reads DIDECASHPCKNGATCIDQPGNYFCQCVPPFKVVDGFSCL. The 37-residue stretch at 733-769 folds into the EGF-like 9; calcium-binding domain; that stretch reads DIDDCILNACEHNSTCKDLHLSYQCVCLSGWEGNFSE. N-linked (GlcNAc...) asparagine glycans are attached at residues asparagine 745, asparagine 766, asparagine 782, asparagine 783, and asparagine 805. The 37-residue stretch at 771 to 807 folds into the EGF-like 10; calcium-binding domain; that stretch reads ESNECKMNPCKNNSTCIDLYKSYRCECTSGWTGQNCS. 33 disulfides stabilise this stretch: cysteine 775-cysteine 786, cysteine 780-cysteine 795, cysteine 797-cysteine 806, cysteine 813-cysteine 824, cysteine 818-cysteine 835, cysteine 837-cysteine 846, cysteine 853-cysteine 866, cysteine 860-cysteine 876, cysteine 878-cysteine 887, cysteine 894-cysteine 905, cysteine 899-cysteine 914, cysteine 916-cysteine 925, cysteine 932-cysteine 943, cysteine 937-cysteine 952, cysteine 954-cysteine 963, cysteine 970-cysteine 981, cysteine 975-cysteine 990, cysteine 992-cysteine 1001, cysteine 1008-cysteine 1019, cysteine 1013-cysteine 1028, cysteine 1030-cysteine 1039, cysteine 1046-cysteine 1056, cysteine 1051-cysteine 1065, cysteine 1067-cysteine 1076, cysteine 1083-cysteine 1094, cysteine 1088-cysteine 1103, cysteine 1105-cysteine 1114, cysteine 1121-cysteine 1137, cysteine 1131-cysteine 1147, cysteine 1149-cysteine 1158, cysteine 1165-cysteine 1176, cysteine 1170-cysteine 1185, and cysteine 1187-cysteine 1196. EGF-like domains follow at residues 809-847, 849-888, and 890-926; these read EINECDSDPCMNGGLCHESTIPGQFVCLCPPLYTGRFCH, RYNPCDLLHNPCRNNSTCLALVDGNQHCICREEFEGKNCE, and DVKECLFLSCQDYGDCEDMVNNFRCICRPGFSGSLCE. N-linked (GlcNAc...) asparagine glycans are attached at residues asparagine 862 and asparagine 863. An EGF-like 14; calcium-binding domain is found at 928–964; it reads EINECSSEPCKNNGTCVDLTNRFFCNCEPGYHGPFCE. Residue asparagine 940 is glycosylated (N-linked (GlcNAc...) asparagine). Residues 966-1002 form the EGF-like 15 domain; the sequence is DVNKCKISPCLDEENCVYRTDGYNCLCAPGYTGINCE. Residues 1004–1040 form the EGF-like 16; calcium-binding domain; that stretch reads NLDECLSEPCLHDGVCIDGINHYTCDCKSGFFGTHCE. 3 consecutive EGF-like domains span residues 1042–1077, 1079–1115, and 1117–1159; these read NANDCLSNPCLHGRCTELINEYPCSCDADGTSTQCK, KINDCTSIPCMNEGFCQKSAHGFTCICPRGYTGAYCE, and SIDN…QFCE. In terms of domain architecture, EGF-like 20; calcium-binding spans 1161–1197; sequence NINECSSSPCLHGADCEDHINGYVCKCQPGWSGHHCE. N-linked (GlcNAc...) asparagine glycans are attached at residues asparagine 1509, asparagine 1522, asparagine 1906, asparagine 1941, asparagine 1960, and asparagine 2033. Residues 1883-2063 enclose the Laminin G-like 1 domain; it reads FSCVRYYGDS…AVKNYHINNC (181 aa). Cystine bridges form between cysteine 2037–cysteine 2063, cysteine 2103–cysteine 2114, cysteine 2108–cysteine 2128, and cysteine 2130–cysteine 2139. Residues 2099-2140 enclose the EGF-like 21 domain; that stretch reads APSVCQQDVCHNGGTCHPIFLSRGIVSFQCDCPLHFTGRFCE. The region spanning 2145–2339 is the Laminin G-like 2 domain; the sequence is LFFPSFNGNS…NIENCHVPWC (195 aa). N-linked (GlcNAc...) asparagine glycans are attached at residues asparagine 2170, asparagine 2185, and asparagine 2228. Disulfide bonds link cysteine 2308/cysteine 2339, cysteine 2339/cysteine 2350, cysteine 2344/cysteine 2359, cysteine 2375/cysteine 2386, cysteine 2380/cysteine 2396, and cysteine 2398/cysteine 2407. EGF-like domains are found at residues 2335 to 2368 and 2371 to 2408; these read HVPWCAHHLCRNNGTCISDNENLFCECPRLYSGK and QFASCENNPCGNGATCVPKSGTDIVCLCPYGRSGPLCT. An N-linked (GlcNAc...) asparagine glycan is attached at asparagine 2347. N-linked (GlcNAc...) asparagine glycans are attached at residues asparagine 2412, asparagine 2453, asparagine 2484, asparagine 2506, and asparagine 2532. The Laminin G-like 3 domain maps to 2419-2609; it reads SGTDAFGYTS…PNAGRSVGQC (191 aa). Disulfide bonds link cysteine 2576–cysteine 2609, cysteine 2614–cysteine 2625, and cysteine 2619–cysteine 2634. EGF-like domains follow at residues 2610–2646 and 2648–2689; these read HASPCSLMKCGNGGTCIESGTSVYCNCTTGWKGAFCT and TVST…IYCE. Asparagine 2635 carries an N-linked (GlcNAc...) asparagine glycan. 4 disulfides stabilise this stretch: cysteine 2636/cysteine 2645, cysteine 2652/cysteine 2668, cysteine 2662/cysteine 2677, and cysteine 2679/cysteine 2688. Positions 2717–2895 constitute a Laminin G-like 4 domain; the sequence is DPSFRSNELS…AKGGSNVGDC (179 aa). Residues asparagine 2775, asparagine 2800, and asparagine 2824 are each glycosylated (N-linked (GlcNAc...) asparagine). Cystine bridges form between cysteine 2868–cysteine 2895, cysteine 2900–cysteine 2911, cysteine 2905–cysteine 2920, and cysteine 2922–cysteine 2931. EGF-like domains are found at residues 2896–2932 and 2933–2970; these read DGTACGYNTCRNGGECTVNGTTFSCRCLPDWAGNTCN and QSVYCLNNLCLHQSLCIPNQSFSYSCLCTLGWVGRYCE. Asparagine 2914 carries N-linked (GlcNAc...) asparagine glycosylation. N-linked (GlcNAc...) asparagine glycosylation occurs at asparagine 2932. 3 disulfide bridges follow: cysteine 2937–cysteine 2948, cysteine 2942–cysteine 2958, and cysteine 2960–cysteine 2969. N-linked (GlcNAc...) asparagine glycosylation occurs at asparagine 2951. N-linked (GlcNAc...) asparagine glycans are attached at residues asparagine 2971, asparagine 3006, asparagine 3036, asparagine 3057, asparagine 3073, and asparagine 3082. Residues 2975-3164 enclose the Laminin G-like 5 domain; that stretch reads FSTAKFMGNS…YDGDEQNEVT (190 aa).

This sequence belongs to the EYS family.

It is found in the cell projection. The protein resides in the cilium. It localises to the photoreceptor outer segment. The protein localises to the cytoplasm. Its subcellular location is the cytoskeleton. It is found in the cilium axoneme. The protein resides in the microtubule organizing center. It localises to the centrosome. The protein localises to the secreted. Its subcellular location is the extracellular space. It is found in the extracellular matrix. The protein resides in the interphotoreceptor matrix. In terms of biological role, required to maintain the integrity of photoreceptor cells. Specifically required for normal morphology of the photoreceptor ciliary pocket, and might thus facilitate protein trafficking between the photoreceptor inner and outer segments via the transition zone. The sequence is that of Protein eyes shut homolog (EYS) from Pongo abelii (Sumatran orangutan).